The following is a 529-amino-acid chain: Auxin response factor 13 (529 aa).

The tract at residues M1–P22 is disordered. A compositionally biased stretch (pro residues) spans A7–P22. A DNA-binding region (TF-B3) is located at residues Y128–A234. Disordered regions lie at residues I443–A462 and P497–L529. Over residues V444–S461 the composition is skewed to polar residues. A compositionally biased stretch (acidic residues) spans G499–S510. Polar residues predominate over residues D511–N523.

This sequence belongs to the ARF family. In terms of assembly, homo and heterodimers. Expressed in roots, culms, leaves and young panicles.

It localises to the nucleus. In terms of biological role, auxin response factors (ARFs) are transcriptional factors that bind specifically to the DNA sequence 5'-TGTCTC-3' found in the auxin-responsive promoter elements (AuxREs). This Oryza sativa subsp. japonica (Rice) protein is Auxin response factor 13 (ARF13).